The following is a 509-amino-acid chain: ATP synthase subunit alpha (509 aa).

169–176 (GDRQTGKT) provides a ligand contact to ATP.

Belongs to the ATPase alpha/beta chains family. F-type ATPases have 2 components, CF(1) - the catalytic core - and CF(0) - the membrane proton channel. CF(1) has five subunits: alpha(3), beta(3), gamma(1), delta(1), epsilon(1). CF(0) has three main subunits: a(1), b(2) and c(9-12). The alpha and beta chains form an alternating ring which encloses part of the gamma chain. CF(1) is attached to CF(0) by a central stalk formed by the gamma and epsilon chains, while a peripheral stalk is formed by the delta and b chains.

The protein resides in the cell inner membrane. It carries out the reaction ATP + H2O + 4 H(+)(in) = ADP + phosphate + 5 H(+)(out). Produces ATP from ADP in the presence of a proton gradient across the membrane. The alpha chain is a regulatory subunit. The polypeptide is ATP synthase subunit alpha (Brucella canis (strain ATCC 23365 / NCTC 10854 / RM-666)).